A 771-amino-acid chain; its full sequence is Probable exo-1,4-beta-xylosidase xlnD (771 aa).

The N-terminal stretch at 1–25 is a signal peptide; the sequence is MARIMSWHYGKAITLFVCLGPVALS. The N-linked (GlcNAc...) asparagine glycan is linked to asparagine 67. The active site involves aspartate 293. N-linked (GlcNAc...) asparagine glycans are attached at residues asparagine 305, asparagine 345, asparagine 423, and asparagine 464.

This sequence belongs to the glycosyl hydrolase 3 family.

It is found in the secreted. The catalysed reaction is Hydrolysis of (1-&gt;4)-beta-D-xylans, to remove successive D-xylose residues from the non-reducing termini.. It functions in the pathway glycan degradation; xylan degradation. Xylan 1,4-beta-xylosidase involved in the hydrolysis of xylan, a major structural heterogeneous polysaccharide found in plant biomass representing the second most abundant polysaccharide in the biosphere, after cellulose. This Neosartorya fischeri (strain ATCC 1020 / DSM 3700 / CBS 544.65 / FGSC A1164 / JCM 1740 / NRRL 181 / WB 181) (Aspergillus fischerianus) protein is Probable exo-1,4-beta-xylosidase xlnD (xlnD).